The following is a 231-amino-acid chain: Sugar fermentation stimulation protein homolog (231 aa).

The protein belongs to the SfsA family.

This is Sugar fermentation stimulation protein homolog from Geotalea daltonii (strain DSM 22248 / JCM 15807 / FRC-32) (Geobacter daltonii).